Here is a 96-residue protein sequence, read N- to C-terminus: Protein CLAVATA 3 (96 aa).

Residues 1–21 (MDSKSFLLLLLLFCFLFLHDA) form the signal peptide. Residues 68 to 96 (ELRTVPSGPDPLHHHVNPPRQPRNNFQLP) form a disordered region. 2 positions are modified to hydroxyproline: P73 and P76. O-linked (Ara...) hydroxyproline glycosylation is present at P76.

The protein belongs to the CLV3/ESR signal peptide family. As to quaternary structure, interacts with the extracellular leucine-rich repeat region of CLV1. Interacts with CLV2. CLV3-derived CLE peptides interacts with a tetrameric complex made of two CLV2/CRN heterodimers. In terms of processing, the MCLV3 peptide contains two hydroxyprolines, but hydroxylation had no direct effect on MCLV3 activity. Post-translationally, the O-glycosylation (arabinosylation) of the hydroxyproline P-76 enhances binding affinity of the MCLV3 peptide for its receptor. As to expression, first detected in heart stage embryos in a patch of cells between the developing cotyledons. In vegetative and inflorescence meristems, expressed in a small cone of cells at the meristem apex.

The protein resides in the secreted. It is found in the extracellular space. Functionally, extracellular signal that regulates meristem maintenance. Acts with CLV1 as a ligand-receptor pair in a signal transduction pathway coordinating growth between adjacent meristematic regions and controlling the balance between meristem cell proliferation and differentiation. Its function is as follows. The secreted peptide MCLV3 activates a signal transduction cascade to restrict WUSCHEL (WUS) expression, inducing shoot and root meristem consumption as cells differentiated into other organs. This Arabidopsis thaliana (Mouse-ear cress) protein is Protein CLAVATA 3.